A 157-amino-acid chain; its full sequence is SsrA-binding protein (157 aa).

The protein belongs to the SmpB family.

The protein localises to the cytoplasm. Its function is as follows. Required for rescue of stalled ribosomes mediated by trans-translation. Binds to transfer-messenger RNA (tmRNA), required for stable association of tmRNA with ribosomes. tmRNA and SmpB together mimic tRNA shape, replacing the anticodon stem-loop with SmpB. tmRNA is encoded by the ssrA gene; the 2 termini fold to resemble tRNA(Ala) and it encodes a 'tag peptide', a short internal open reading frame. During trans-translation Ala-aminoacylated tmRNA acts like a tRNA, entering the A-site of stalled ribosomes, displacing the stalled mRNA. The ribosome then switches to translate the ORF on the tmRNA; the nascent peptide is terminated with the 'tag peptide' encoded by the tmRNA and targeted for degradation. The ribosome is freed to recommence translation, which seems to be the essential function of trans-translation. This chain is SsrA-binding protein, found in Chromohalobacter salexigens (strain ATCC BAA-138 / DSM 3043 / CIP 106854 / NCIMB 13768 / 1H11).